Consider the following 171-residue polypeptide: Bursicon (171 aa).

Positions Met1 to Ala31 are cleaved as a signal peptide. 5 disulfides stabilise this stretch: Cys47-Cys96, Cys61-Cys110, Cys71-Cys131, Cys75-Cys133, and Cys93-Cys136. Positions Cys47–Thr137 constitute a CTCK domain.

As to quaternary structure, heterodimer of burs and pburs.

The protein resides in the secreted. Functionally, final heterodimeric neurohormone released at the end of the molting cycle, involved in the sclerotization (tanning) of the insect cuticle, melanization and wing spreading. The polypeptide is Bursicon (Culex pipiens pipiens (Northern house mosquito)).